A 430-amino-acid polypeptide reads, in one-letter code: Enolase (430 aa).

Position 167 (Gln167) interacts with (2R)-2-phosphoglycerate. Glu209 acts as the Proton donor in catalysis. The Mg(2+) site is built by Asp246, Glu287, and Asp314. 3 residues coordinate (2R)-2-phosphoglycerate: Lys339, Arg368, and Ser369. The active-site Proton acceptor is Lys339.

The protein belongs to the enolase family. Mg(2+) is required as a cofactor.

It is found in the cytoplasm. The protein resides in the secreted. The protein localises to the cell surface. It carries out the reaction (2R)-2-phosphoglycerate = phosphoenolpyruvate + H2O. It participates in carbohydrate degradation; glycolysis; pyruvate from D-glyceraldehyde 3-phosphate: step 4/5. Functionally, catalyzes the reversible conversion of 2-phosphoglycerate (2-PG) into phosphoenolpyruvate (PEP). It is essential for the degradation of carbohydrates via glycolysis. The protein is Enolase of Synechococcus sp. (strain ATCC 27144 / PCC 6301 / SAUG 1402/1) (Anacystis nidulans).